Here is a 465-residue protein sequence, read N- to C-terminus: MKDVVLVKSLYRNTSEYSDKKVKISGWIRTLRASNAFGFIEVNDGSFFKNVQVVFDSAKISNYKEISKLPISSSISVIGTLVETPDSKQPFEIQAEEIIVEGMSDSDYPLQKKRHTFEYLRTIAHLRPRSNAFSATFRVRSVAAYAIHKFFQDQGFVYTHTPILTGSDCEGAGEMFRVTTLDMMAPPIAEEGGIDFSQDFFGKETNLTVSGQLNAECFALAFRNIYTFGPTFRAENSNTVKHAAEFWMIEPEMAFADLIDDMEVAENMLKYVIKYVMDECPEEIAFFNQFVDKGLLERLNHVVNSEFGKVTYTEAVKLLQESGKEFEYPVEWGIDLQTEHERYLTEQIFKKPVFVTDYPKDIKAFYMRLNEDGKTVAAMDCLVPGIGEIIGGSQREERLDVLKARMAELNLNEEDYWWYLELRKYGETVHSGFGLGFERLIMYITGMANIRDVIPFPRTTGTAEF.

This sequence belongs to the class-II aminoacyl-tRNA synthetase family. As to quaternary structure, homodimer.

The protein resides in the cytoplasm. It carries out the reaction tRNA(Asn) + L-asparagine + ATP = L-asparaginyl-tRNA(Asn) + AMP + diphosphate + H(+). The polypeptide is Asparagine--tRNA ligase (Clostridium perfringens (strain ATCC 13124 / DSM 756 / JCM 1290 / NCIMB 6125 / NCTC 8237 / Type A)).